Here is a 601-residue protein sequence, read N- to C-terminus: Glutathione-regulated potassium-efflux system protein KefB (601 aa).

A run of 13 helical transmembrane segments spans residues 4-24 (SDLL…VPLA), 29-49 (IGAV…GLGF), 55-75 (EILH…GLEL), 87-107 (IFGV…GLLM), 115-135 (AAVI…LQLM), 152-172 (VLLF…LLAG), 177-197 (HFDW…LIGG), 207-227 (FIAD…LVLG), 230-250 (LFMD…GVLL), 262-282 (AIDP…GMSL), 284-304 (LGVL…LVAV), 324-344 (MQFA…FSTA), and 356-376 (SLLL…MKLV). An RCK N-terminal domain is found at 400-519 (KPQVIVVGFG…AGVTQFSRET (120 aa)).

It belongs to the monovalent cation:proton antiporter 2 (CPA2) transporter (TC 2.A.37) family. KefB subfamily. As to quaternary structure, interacts with the regulatory subunit KefG.

The protein resides in the cell inner membrane. Its function is as follows. Pore-forming subunit of a potassium efflux system that confers protection against electrophiles. Catalyzes K(+)/H(+) antiport. The polypeptide is Glutathione-regulated potassium-efflux system protein KefB (Citrobacter koseri (strain ATCC BAA-895 / CDC 4225-83 / SGSC4696)).